The chain runs to 101 residues: UPF0235 protein MmarC7_0309 (101 aa).

Belongs to the UPF0235 family.

This Methanococcus maripaludis (strain C7 / ATCC BAA-1331) protein is UPF0235 protein MmarC7_0309.